The primary structure comprises 379 residues: Serpin B5 (379 aa).

N133, N176, and N361 each carry an N-linked (GlcNAc...) asparagine glycan.

This sequence belongs to the serpin family. Ov-serpin subfamily.

It is found in the secreted. It localises to the extracellular space. May not exhibit serine protease inhibitory activity. The chain is Serpin B5 (serpinb5) from Xenopus tropicalis (Western clawed frog).